The following is a 110-amino-acid chain: Light-harvesting complex-like protein OHP1, chloroplastic (110 aa).

The transit peptide at 1 to 41 directs the protein to the chloroplast; sequence MSSSPLSSSLFHPLSTLSTHCHGRRQNLCFNRKQQPFVVRA. The Stromal portion of the chain corresponds to 42 to 74; the sequence is AKLPEGVIVPKAQPKSQPAFLGFTQTAEIWNSR. The helical transmembrane segment at 75-95 threads the bilayer; that stretch reads ACMIGLIGTFIVELILNKGIL. The Lumenal portion of the chain corresponds to 96–110; sequence ELIGVEIGKGLDLPL.

The protein belongs to the ELIP/psbS family. May bind chlorophyll and form dimers in the thylakoid membrane. Component of a high molecular weight complex containing OHP1, OHP2 and HCF244, and PSII core proteins D1/D2, HCF136 and HCF173. Interacts with HCF244. Forms a trimeric complex with OHP2 and HCF244 that mutually stabilizes each subunit. As to expression, mostly expressed in cotyledons and shoot apices.

The protein localises to the plastid. The protein resides in the chloroplast thylakoid membrane. Its function is as follows. May play a photoprotective role in the thylakoid membrane in response to light stress. Involved in photosystems I (PSI) and II (PSII) core proteins function. Forms a trimeric complex with OHP2 and HCF244 that is required to promote PSII core subunit assembly. The trimeric complex forms a transient PSII reaction center-like complex with PsbA, PsbD, PsbE, PsbF and PsbI subunits in thylakoids for early assembly of PSII as well as PSII repair. The trimeric complex is required for the recruitment of ribosomes to the psbA mRNA during PSII biogenesis and repair. Forms a heterodimer with OHP1 that binds chlorophylls and carotenoids, and that may function in the delivery of pigments to the PsbA subunit of PSII. This chain is Light-harvesting complex-like protein OHP1, chloroplastic, found in Arabidopsis thaliana (Mouse-ear cress).